The sequence spans 68 residues: Arabinogalactan peptide 1 (68 aa).

Positions 1–30 are cleaved as a signal peptide; that stretch reads MAGQLKSKIVAVAVAAVVVVASSLVGTASA. The GPI-anchor amidated serine moiety is linked to residue serine 40. Positions 41-68 are cleaved as a propeptide — removed in mature form; that stretch reads GATATAAAAPAFAAVSVAAAALGGYLFC.

Belongs to the AG-peptide AGP family. Post-translationally, O-glycosylated on hydroxyprolines; noncontiguous hydroxylproline residues are glycosylated with arabinogalactan. In terms of tissue distribution, expressed in roots, stems, flowers and seeds.

The protein resides in the vacuole. Its subcellular location is the aleurone grain membrane. Its function is as follows. Proteoglycan that seems to be implicated in diverse developmental roles such as differentiation, cell-cell recognition, embryogenesis and programmed cell death. The polypeptide is Arabinogalactan peptide 1 (AGPEP1) (Oryza sativa subsp. japonica (Rice)).